The following is a 261-amino-acid chain: Hemin import ATP-binding protein HmuV (261 aa).

An ABC transporter domain is found at 5-241; sequence YTAENLTFTR…DALAHWYGAQ (237 aa). Residue 37–44 coordinates ATP; the sequence is GPNGAGKS.

Belongs to the ABC transporter superfamily. Heme (hemin) importer (TC 3.A.1.14.5) family. As to quaternary structure, the complex is composed of two ATP-binding proteins (HmuV), two transmembrane proteins (HmuU) and a solute-binding protein (HmuT).

The protein resides in the cell inner membrane. Part of the ABC transporter complex HmuTUV involved in hemin import. Responsible for energy coupling to the transport system. The protein is Hemin import ATP-binding protein HmuV of Enterobacter cloacae.